A 450-amino-acid polypeptide reads, in one-letter code: Na(+)/H(+) antiporter NhaA 2 (450 aa).

12 helical membrane passes run 43–63 (VGGAVLLVASAVALVWANSPW), 86–106 (LTLGTWAADGLLAVFFLVVGL), 124–144 (ALPMAAAVGGMVVPALIFVAV), 155–175 (GWAIPTATDIAFAVAVLAVIS), 185–205 (FLLTLAVVDDLLAVTVIAVFY), 208–228 (EINLTALGLSIVPLALFALCV), 234–254 (SWWLLLPLGVATWVLMHESGV), 258–278 (VAGVLLGFTVPVLRSVAAGGP), 299–319 (VAVPVFAFFAAGVAIGGVSGL), 326–346 (PITLGIILGLVVGKPVGIFLT), 364–384 (WIDVFGVALLAGIGFTVSLLI), and 398–418 (FVKVGVLTGSLVAALIAAVLL).

This sequence belongs to the NhaA Na(+)/H(+) (TC 2.A.33) antiporter family.

Its subcellular location is the cell membrane. The catalysed reaction is Na(+)(in) + 2 H(+)(out) = Na(+)(out) + 2 H(+)(in). Its function is as follows. Na(+)/H(+) antiporter that extrudes sodium in exchange for external protons. The sequence is that of Na(+)/H(+) antiporter NhaA 2 from Mycobacterium sp. (strain KMS).